The chain runs to 316 residues: Ornithine carbamoyltransferase (316 aa).

Carbamoyl phosphate-binding positions include S57–T60, Q84, R108, and H135–Q138. L-ornithine contacts are provided by residues N166, D230, and S234–M235. Carbamoyl phosphate-binding positions include C269 to L270 and R297.

It belongs to the aspartate/ornithine carbamoyltransferase superfamily. OTCase family.

It localises to the cytoplasm. The catalysed reaction is carbamoyl phosphate + L-ornithine = L-citrulline + phosphate + H(+). The protein operates within amino-acid degradation; L-arginine degradation via ADI pathway; carbamoyl phosphate from L-arginine: step 2/2. Reversibly catalyzes the transfer of the carbamoyl group from carbamoyl phosphate (CP) to the N(epsilon) atom of ornithine (ORN) to produce L-citrulline. This is Ornithine carbamoyltransferase from Bacillus cereus (strain 03BB102).